Here is a 339-residue protein sequence, read N- to C-terminus: Glyceraldehyde-3-phosphate dehydrogenase (339 aa).

NAD(+)-binding positions include 13–14, aspartate 35, and lysine 84; that span reads RI. Residues 156–158, threonine 187, 216–217, and arginine 239 each bind D-glyceraldehyde 3-phosphate; these read SCT and TG. The active-site Nucleophile is cysteine 157. Asparagine 321 lines the NAD(+) pocket.

It belongs to the glyceraldehyde-3-phosphate dehydrogenase family. Homotetramer.

It is found in the cytoplasm. The enzyme catalyses D-glyceraldehyde 3-phosphate + phosphate + NAD(+) = (2R)-3-phospho-glyceroyl phosphate + NADH + H(+). It participates in carbohydrate degradation; glycolysis; pyruvate from D-glyceraldehyde 3-phosphate: step 1/5. In Onchocerca volvulus, this protein is Glyceraldehyde-3-phosphate dehydrogenase.